The chain runs to 413 residues: Protein trichome birefringence-like 31 (413 aa).

The helical; Signal-anchor for type II membrane protein transmembrane segment at 12–34 (IQSIFQVVLVSLLVLGSVRWILD) threads the bilayer. The GDS motif signature appears at 141–143 (GDS). The DCXHWCLPGXXDXWN motif motif lies at 384-398 (DCIHWCLPGVPDTWN).

This sequence belongs to the PC-esterase family. TBL subfamily.

It is found in the membrane. Its function is as follows. May act as a bridging protein that binds pectin and other cell wall polysaccharides. Probably involved in maintaining esterification of pectins. May be involved in the specific O-acetylation of cell wall polymers. This Arabidopsis thaliana (Mouse-ear cress) protein is Protein trichome birefringence-like 31 (TBL31).